A 331-amino-acid polypeptide reads, in one-letter code: UDP-GalNAc:beta-1,3-N-acetylgalactosaminyltransferase 1 (331 aa).

The Cytoplasmic segment spans residues 1-20 (MAPAVLTALPNRMSLRSLKW). The chain crosses the membrane as a helical; Signal-anchor for type II membrane protein span at residues 21–43 (SLLLLSLLSFLVIWYLSLPHYNV). Over 44 to 331 (IERVNWMYFY…VMLRNTTCHY (288 aa)) the chain is Lumenal. N-linked (GlcNAc...) asparagine glycosylation is found at asparagine 72, asparagine 154, asparagine 198, asparagine 212, and asparagine 326.

Belongs to the glycosyltransferase 31 family. It depends on Mg(2+) as a cofactor. In terms of tissue distribution, detected in brain, ovary, kidney, uterus and stomach. In ovary, specifically expressed in follicular granulosa cells and shows particularly strong expression at later stages of follicle development.

Its subcellular location is the golgi apparatus membrane. The enzyme catalyses a globoside Gb3Cer (d18:1(4E)) + UDP-N-acetyl-alpha-D-galactosamine = a globoside Gb4Cer (d18:1(4E)) + UDP + H(+). It functions in the pathway protein modification; protein glycosylation. In terms of biological role, transfers N-acetylgalactosamine onto globotriaosylceramide. Plays a critical role in preimplantation stage embryonic development. The protein is UDP-GalNAc:beta-1,3-N-acetylgalactosaminyltransferase 1 of Mus musculus (Mouse).